Reading from the N-terminus, the 231-residue chain is Ribosome maturation factor RimM (231 aa).

The interval 1–29 (MSERDSGSSGRAKAKRQPGAKAPFGPFVR) is disordered. The 82-residue stretch at 150 to 231 (TDEYYWVDLV…KIIVDWEADY (82 aa)) folds into the PRC barrel domain.

The protein belongs to the RimM family. Binds ribosomal protein uS19.

It is found in the cytoplasm. In terms of biological role, an accessory protein needed during the final step in the assembly of 30S ribosomal subunit, possibly for assembly of the head region. Essential for efficient processing of 16S rRNA. May be needed both before and after RbfA during the maturation of 16S rRNA. It has affinity for free ribosomal 30S subunits but not for 70S ribosomes. The polypeptide is Ribosome maturation factor RimM (Paraburkholderia phymatum (strain DSM 17167 / CIP 108236 / LMG 21445 / STM815) (Burkholderia phymatum)).